The chain runs to 86 residues: High affinity immunoglobulin epsilon receptor subunit gamma (86 aa).

The N-terminal stretch at 1–18 (MIPAVVLLLLLLVEQAAA) is a signal peptide. Over 19-23 (LGEPQ) the chain is Extracellular. A helical transmembrane segment spans residues 24–44 (LCYILDAILFLYGIVLTLLYC). Residues 45–86 (RLKIQVRKAAIASYEKSDGVYTGLSTRNQETYETLKHEKPPQ) lie on the Cytoplasmic side of the membrane. The 29-residue stretch at 54-82 (AIASYEKSDGVYTGLSTRNQETYETLKHE) folds into the ITAM domain. Position 65 is a phosphotyrosine (Y65). S69 is subject to Phosphoserine. At Y76 the chain carries Phosphotyrosine. T78 carries the phosphothreonine modification.

The protein belongs to the CD3Z/FCER1G family. IgE Fc receptor is a tetramer of an alpha chain, a beta chain, and two disulfide linked gamma chains. Associates with FCGR1A; forms a functional signaling complex. The signaling subunit of immunoglobulin gamma (IgG) Fc receptor complex. As a homodimer or a heterodimer of CD247 and FCER1G, associates with the ligand binding subunit FCGR3A to form a functional receptor complex. Associates with CLEC6A. Interacts with CLEC4E. Interacts (via ITAM domain) with SYK (via SH2 domains); activates SYK, enabling integrin-mediated activation of neutrophils and macrophages. Interacts with CSF2RB and recruits SYK in response to IL3 stimulation; this interaction is direct. Interacts with CD300LH; the interaction may be indirect. Interacts with CD300LD. Interacts with TARM1.

The protein localises to the cell membrane. Adapter protein containing an immunoreceptor tyrosine-based activation motif (ITAM) that transduces activation signals from various immunoreceptors. As a component of the high-affinity immunoglobulin E (IgE) receptor, mediates allergic inflammatory signaling in mast cells. As a constitutive component of interleukin-3 receptor complex, selectively mediates interleukin 4/IL4 production by basophils priming T-cells toward effector T-helper 2 subset. Associates with pattern recognition receptors CLEC4D and CLEC4E to form a functional signaling complex in myeloid cells. Binding of mycobacterial trehalose 6,6'-dimycolate (TDM) to this receptor complex leads to phosphorylation of ITAM, triggering activation of SYK, CARD9 and NF-kappa-B, consequently driving maturation of antigen-presenting cells and shaping antigen-specific priming of T-cells toward effector T-helper 1 and T-helper 17 cell subtypes. May function cooperatively with other activating receptors. Functionally linked to integrin beta-2/ITGB2-mediated neutrophil activation. Also involved in integrin alpha-2/ITGA2-mediated platelet activation. The chain is High affinity immunoglobulin epsilon receptor subunit gamma (FCER1G) from Macaca fascicularis (Crab-eating macaque).